Consider the following 280-residue polypeptide: Aspartate/glutamate leucyltransferase (280 aa).

This sequence belongs to the R-transferase family. Bpt subfamily.

It localises to the cytoplasm. It carries out the reaction N-terminal L-glutamyl-[protein] + L-leucyl-tRNA(Leu) = N-terminal L-leucyl-L-glutamyl-[protein] + tRNA(Leu) + H(+). The enzyme catalyses N-terminal L-aspartyl-[protein] + L-leucyl-tRNA(Leu) = N-terminal L-leucyl-L-aspartyl-[protein] + tRNA(Leu) + H(+). Functions in the N-end rule pathway of protein degradation where it conjugates Leu from its aminoacyl-tRNA to the N-termini of proteins containing an N-terminal aspartate or glutamate. The polypeptide is Aspartate/glutamate leucyltransferase (Cereibacter sphaeroides (strain ATCC 17023 / DSM 158 / JCM 6121 / CCUG 31486 / LMG 2827 / NBRC 12203 / NCIMB 8253 / ATH 2.4.1.) (Rhodobacter sphaeroides)).